The primary structure comprises 171 residues: Protein BTG1 (171 aa).

Position 159 is a phosphoserine (Ser159).

This sequence belongs to the BTG family. As to quaternary structure, interacts with CNOT7 and CNOT8.

Functionally, anti-proliferative protein. This chain is Protein BTG1 (BTG1), found in Homo sapiens (Human).